The primary structure comprises 337 residues: Ornithine carbamoyltransferase (337 aa).

Carbamoyl phosphate-binding positions include 56 to 59, glutamine 83, arginine 107, and 134 to 137; these read STRT and HPTQ. L-ornithine-binding positions include asparagine 168, aspartate 232, and 236 to 237; that span reads SM. Carbamoyl phosphate is bound by residues 274–275 and arginine 320; that span reads CL.

The protein belongs to the aspartate/ornithine carbamoyltransferase superfamily. OTCase family.

Its subcellular location is the cytoplasm. It catalyses the reaction carbamoyl phosphate + L-ornithine = L-citrulline + phosphate + H(+). The protein operates within amino-acid biosynthesis; L-arginine biosynthesis; L-arginine from L-ornithine and carbamoyl phosphate: step 1/3. Its function is as follows. Reversibly catalyzes the transfer of the carbamoyl group from carbamoyl phosphate (CP) to the N(epsilon) atom of ornithine (ORN) to produce L-citrulline. This is Ornithine carbamoyltransferase from Shigella flexneri serotype 5b (strain 8401).